Here is a 254-residue protein sequence, read N- to C-terminus: tRNA (guanine-N(1)-)-methyltransferase (254 aa).

S-adenosyl-L-methionine-binding positions include G121 and 141-146; that span reads LGDYVL.

It belongs to the RNA methyltransferase TrmD family. As to quaternary structure, homodimer.

The protein localises to the cytoplasm. The catalysed reaction is guanosine(37) in tRNA + S-adenosyl-L-methionine = N(1)-methylguanosine(37) in tRNA + S-adenosyl-L-homocysteine + H(+). In terms of biological role, specifically methylates guanosine-37 in various tRNAs. The sequence is that of tRNA (guanine-N(1)-)-methyltransferase from Psychrobacter cryohalolentis (strain ATCC BAA-1226 / DSM 17306 / VKM B-2378 / K5).